The primary structure comprises 186 residues: Putative manganese efflux pump MntP (186 aa).

Helical transmembrane passes span 1–21 (MSFLTNFLLGLGLAMDAFAVS), 41–61 (VFFGGFQALMPVLGWVGGSAV), 62–82 (SGFVSDYAPWIAFGLLAFIGG), 105–127 (LFLLAVATSIDALAVGISFAFLG), 139–159 (CVTFVMSFCGAVLGYRIGHFF), and 163–183 (VEILGGLILIGLGVKILAEHM).

This sequence belongs to the MntP (TC 9.B.29) family.

The protein resides in the cell membrane. Its function is as follows. Probably functions as a manganese efflux pump. The chain is Putative manganese efflux pump MntP from Methanosarcina mazei (strain ATCC BAA-159 / DSM 3647 / Goe1 / Go1 / JCM 11833 / OCM 88) (Methanosarcina frisia).